We begin with the raw amino-acid sequence, 237 residues long: Aliphatic sulfonates import ATP-binding protein SsuB 1 (237 aa).

The ABC transporter domain occupies 5-221; sequence LMDIRVEHKA…PRDRRDPLLA (217 aa). Residue 38 to 45 coordinates ATP; it reads GPSGCGKS.

It belongs to the ABC transporter superfamily. Aliphatic sulfonates importer (TC 3.A.1.17.2) family. The complex is composed of two ATP-binding proteins (SsuB), two transmembrane proteins (SsuC) and a solute-binding protein (SsuA).

Its subcellular location is the cell inner membrane. The catalysed reaction is ATP + H2O + aliphatic sulfonate-[sulfonate-binding protein]Side 1 = ADP + phosphate + aliphatic sulfonateSide 2 + [sulfonate-binding protein]Side 1.. In terms of biological role, part of the ABC transporter complex SsuABC involved in aliphatic sulfonates import. Responsible for energy coupling to the transport system. This is Aliphatic sulfonates import ATP-binding protein SsuB 1 from Pseudomonas syringae pv. syringae (strain B728a).